The chain runs to 418 residues: AP-3 complex subunit mu-2 (418 aa).

The 242-residue stretch at 176–417 (NNEAYFDVVE…MTKAGKFQVR (242 aa)) folds into the MHD domain.

Belongs to the adaptor complexes medium subunit family. Adaptor protein complex 3 (AP-3) is a heterotetramer composed of two large adaptins (delta-type subunit AP3D1 and beta-type subunit AP3B1 or AP3B2), a medium adaptin (mu-type subunit AP3M1 or AP3M2) and a small adaptin (sigma-type subunit APS1 or AP3S2). AP-3 associates with the BLOC-1 complex.

Its subcellular location is the golgi apparatus. The protein localises to the cytoplasmic vesicle membrane. In terms of biological role, component of the adaptor complexes which link clathrin to receptors in coated vesicles. Clathrin-associated protein complexes are believed to interact with the cytoplasmic tails of membrane proteins, leading to their selection and concentration. Ap47 is a subunit of the plasma membrane adaptor. In concert with the BLOC-1 complex, AP-3 is required to target cargos into vesicles assembled at cell bodies for delivery into neurites and nerve terminals. In Rattus norvegicus (Rat), this protein is AP-3 complex subunit mu-2 (Ap3m2).